The sequence spans 278 residues: ATPase SWSAP1 (278 aa).

Residues Ser237–Thr278 are disordered. Polar residues predominate over residues Thr269 to Thr278.

In terms of assembly, interacts with ZSWIM7; they form a functional complex involved in homologous recombination repair and stabilize each other. Interacts with RAD51, RAD51B, RAD51C, RAD51D and XRCC3; involved in homologous recombination repair.

Its subcellular location is the nucleus. Functionally, ATPase which is preferentially stimulated by single-stranded DNA and is involved in homologous recombination repair (HRR). Has a DNA-binding activity which is independent of its ATPase activity. This chain is ATPase SWSAP1 (Swsap1), found in Mus musculus (Mouse).